A 186-amino-acid chain; its full sequence is Large ribosomal subunit protein uL22 (186 aa).

Positions 159-186 (KAAENEPAKKKLSKKKLQRQKEKMMRNE) are disordered. A compositionally biased stretch (basic and acidic residues) spans 177–186 (RQKEKMMRNE).

It belongs to the universal ribosomal protein uL22 family.

The chain is Large ribosomal subunit protein uL22 (RpL17) from Aedes albopictus (Asian tiger mosquito).